The chain runs to 166 residues: Eukaryotic translation initiation factor 5A (166 aa).

Residues Met-1 to Tyr-21 are disordered. Lys-53 is subject to Hypusine. The interval Glu-101–Asp-121 is disordered. Residues Met-112–Asp-121 show a composition bias toward acidic residues.

Belongs to the eIF-5A family. In terms of processing, lys-53 undergoes hypusination, a unique post-translational modification that consists in the addition of a butylamino group from spermidine to lysine side chain, leading to the formation of the unusual amino acid hypusine. eIF-5As are the only known proteins to undergo this modification, which is essential for their function.

It is found in the cytoplasm. In terms of biological role, translation factor that promotes translation elongation and termination, particularly upon ribosome stalling at specific amino acid sequence contexts. Binds between the exit (E) and peptidyl (P) site of the ribosome and promotes rescue of stalled ribosome: specifically required for efficient translation of polyproline-containing peptides as well as other motifs that stall the ribosome. Acts as a ribosome quality control (RQC) cofactor by joining the RQC complex to facilitate peptidyl transfer during CAT tailing step. The chain is Eukaryotic translation initiation factor 5A from Leishmania donovani.